Reading from the N-terminus, the 134-residue chain is Phosphoribosyl-AMP cyclohydrolase (134 aa).

Asp77 is a binding site for Mg(2+). Cys78 serves as a coordination point for Zn(2+). Mg(2+) contacts are provided by Asp79 and Asp81. Cys95 and Cys102 together coordinate Zn(2+).

It belongs to the PRA-CH family. In terms of assembly, homodimer. Requires Mg(2+) as cofactor. Zn(2+) is required as a cofactor.

It is found in the cytoplasm. It carries out the reaction 1-(5-phospho-beta-D-ribosyl)-5'-AMP + H2O = 1-(5-phospho-beta-D-ribosyl)-5-[(5-phospho-beta-D-ribosylamino)methylideneamino]imidazole-4-carboxamide. It participates in amino-acid biosynthesis; L-histidine biosynthesis; L-histidine from 5-phospho-alpha-D-ribose 1-diphosphate: step 3/9. In terms of biological role, catalyzes the hydrolysis of the adenine ring of phosphoribosyl-AMP. The polypeptide is Phosphoribosyl-AMP cyclohydrolase (Pseudomonas aeruginosa (strain UCBPP-PA14)).